The sequence spans 400 residues: Probable aspartate/prephenate aminotransferase (400 aa).

L-aspartate-binding residues include glycine 39, tryptophan 125, and asparagine 175. Lysine 239 is modified (N6-(pyridoxal phosphate)lysine). Arginine 375 contributes to the L-aspartate binding site.

It belongs to the class-I pyridoxal-phosphate-dependent aminotransferase family. Homodimer. The cofactor is pyridoxal 5'-phosphate.

The protein localises to the cytoplasm. The catalysed reaction is L-aspartate + 2-oxoglutarate = oxaloacetate + L-glutamate. It catalyses the reaction L-arogenate + 2-oxoglutarate = prephenate + L-glutamate. In terms of biological role, catalyzes the reversible conversion of aspartate and 2-oxoglutarate to glutamate and oxaloacetate. Can also transaminate prephenate in the presence of glutamate. The polypeptide is Probable aspartate/prephenate aminotransferase (aspC) (Rhizobium leguminosarum bv. phaseoli).